The following is a 339-amino-acid chain: Phenylalanine--tRNA ligase alpha subunit (339 aa).

Glu254 is a binding site for Mg(2+).

It belongs to the class-II aminoacyl-tRNA synthetase family. Phe-tRNA synthetase alpha subunit type 1 subfamily. Tetramer of two alpha and two beta subunits. It depends on Mg(2+) as a cofactor.

The protein localises to the cytoplasm. It catalyses the reaction tRNA(Phe) + L-phenylalanine + ATP = L-phenylalanyl-tRNA(Phe) + AMP + diphosphate + H(+). The chain is Phenylalanine--tRNA ligase alpha subunit from Clostridium perfringens (strain SM101 / Type A).